We begin with the raw amino-acid sequence, 275 residues long: Dermonecrotic toxin LamSicTox-alphaIV1i (275 aa).

Histidine 5 is a catalytic residue. Positions 25 and 27 each coordinate Mg(2+). The active-site Nucleophile is histidine 41. Disulfide bonds link cysteine 45/cysteine 51 and cysteine 47/cysteine 192. Aspartate 85 contributes to the Mg(2+) binding site.

The protein belongs to the arthropod phospholipase D family. Class II subfamily. It depends on Mg(2+) as a cofactor. In terms of tissue distribution, expressed by the venom gland.

The protein resides in the secreted. It carries out the reaction an N-(acyl)-sphingosylphosphocholine = an N-(acyl)-sphingosyl-1,3-cyclic phosphate + choline. The enzyme catalyses an N-(acyl)-sphingosylphosphoethanolamine = an N-(acyl)-sphingosyl-1,3-cyclic phosphate + ethanolamine. The catalysed reaction is a 1-acyl-sn-glycero-3-phosphocholine = a 1-acyl-sn-glycero-2,3-cyclic phosphate + choline. It catalyses the reaction a 1-acyl-sn-glycero-3-phosphoethanolamine = a 1-acyl-sn-glycero-2,3-cyclic phosphate + ethanolamine. In terms of biological role, dermonecrotic toxins cleave the phosphodiester linkage between the phosphate and headgroup of certain phospholipids (sphingolipid and lysolipid substrates), forming an alcohol (often choline) and a cyclic phosphate. This toxin acts on sphingomyelin (SM). It may also act on ceramide phosphoethanolamine (CPE), lysophosphatidylcholine (LPC) and lysophosphatidylethanolamine (LPE), but not on lysophosphatidylserine (LPS), and lysophosphatidylglycerol (LPG). It acts by transphosphatidylation, releasing exclusively cyclic phosphate products as second products. Induces dermonecrosis, hemolysis, increased vascular permeability, edema, inflammatory response, and platelet aggregation. This chain is Dermonecrotic toxin LamSicTox-alphaIV1i, found in Loxosceles amazonica (Recluse spider).